A 141-amino-acid polypeptide reads, in one-letter code: Large ribosomal subunit protein uL11 (141 aa).

This sequence belongs to the universal ribosomal protein uL11 family. As to quaternary structure, part of the ribosomal stalk of the 50S ribosomal subunit. Interacts with L10 and the large rRNA to form the base of the stalk. L10 forms an elongated spine to which L12 dimers bind in a sequential fashion forming a multimeric L10(L12)X complex. In terms of processing, one or more lysine residues are methylated.

Functionally, forms part of the ribosomal stalk which helps the ribosome interact with GTP-bound translation factors. This Pediococcus pentosaceus (strain ATCC 25745 / CCUG 21536 / LMG 10740 / 183-1w) protein is Large ribosomal subunit protein uL11.